Here is a 257-residue protein sequence, read N- to C-terminus: Short chain dehydrogenase helC (257 aa).

Positions 1-22 (MNTAIITGAAQGVGLCIAEALA) are cleaved as a signal peptide. Val13 contributes to the NADP(+) binding site. A glycan (N-linked (GlcNAc...) asparagine) is linked at Asn46. NADP(+) contacts are provided by Asp60 and Asn87. A glycan (N-linked (GlcNAc...) asparagine) is linked at Asn110. NADP(+)-binding residues include Tyr154, Lys158, Ile185, and Thr187. The active-site Proton acceptor is Tyr154. Lys158 (lowers pKa of active site Tyr) is an active-site residue.

It belongs to the short-chain dehydrogenases/reductases (SDR) family.

Its pathway is mycotoxin biosynthesis. Its function is as follows. Short chain dehydrogenase; part of the gene cluster that mediates the biosynthesis of helvolic acid, an antibacterial nortriterpenoid. Protostadienol synthase helA cyclizes (3S)-oxidosqualene to (17Z)-protosta-17(20),24-dien-3-beta-ol (protostadienol). The synthesis of protostadienol is followed by several steps of monooxygenation, dehydrogenation, and acyl transfer to yield the final helvolic acid. Following the cyclization to the tetracyclic protostadienol by helA, cytochrome P450 monooxygenases helB1-mediated and helB2-mediated oxidation at C-4 and C-16, acyltransferase helD2-dependent acetylation of 16-OH, oxidation of C-21 by cytochrome P450 monooxygenase helB4, and short chain dehydrogenase helC-dependent oxidative decarboxylation yield the fusidane skeleton. This intermediate is further modified in three additional steps mediated by the cytochrome P450 monooxygenase helB3, the acyltransferase helD1, and the 3-ketosteroid 1-dehydrogenase helE to give helvolic acid. Compared with the late stages in the biosynthesis of helvolic acid, enzymes involved in the early stage modifications act in a relatively strict order. The hydroxylation of C-16 by helB1 and subsequent acetylation by helD2 should occur before the helB3-mediated oxidation of C-21. C-4 demethylation in fusidane-type antibiotics proceeds in an unusual manner though it is also achieved by oxidative decarboxylation. The methyl group at C-4 beta position is oxidized by helB1 and subsequently removed by the short chain dehydrogenase helC. The protein is Short chain dehydrogenase helC of Aspergillus fumigatus (strain ATCC MYA-4609 / CBS 101355 / FGSC A1100 / Af293) (Neosartorya fumigata).